Reading from the N-terminus, the 397-residue chain is 1-deoxy-D-xylulose 5-phosphate reductoisomerase (397 aa).

Positions 10, 11, 12, 13, 38, and 125 each coordinate NADPH. K126 lines the 1-deoxy-D-xylulose 5-phosphate pocket. Residue E127 participates in NADPH binding. D151 lines the Mn(2+) pocket. S152, E153, S187, and H210 together coordinate 1-deoxy-D-xylulose 5-phosphate. E153 is a binding site for Mn(2+). An NADPH-binding site is contributed by G216. Positions 223, 228, 229, and 232 each coordinate 1-deoxy-D-xylulose 5-phosphate. E232 serves as a coordination point for Mn(2+).

It belongs to the DXR family. As to quaternary structure, homodimer. Mg(2+) serves as cofactor. Requires Mn(2+) as cofactor.

The catalysed reaction is 2-C-methyl-D-erythritol 4-phosphate + NADP(+) = 1-deoxy-D-xylulose 5-phosphate + NADPH + H(+). The protein operates within isoprenoid biosynthesis; isopentenyl diphosphate biosynthesis via DXP pathway; isopentenyl diphosphate from 1-deoxy-D-xylulose 5-phosphate: step 1/6. In terms of biological role, catalyzes the NADPH-dependent rearrangement and reduction of 1-deoxy-D-xylulose-5-phosphate (DXP) to 2-C-methyl-D-erythritol 4-phosphate (MEP). This is 1-deoxy-D-xylulose 5-phosphate reductoisomerase from Blochmanniella pennsylvanica (strain BPEN).